The sequence spans 31 residues: Cyclotide vibi-G (31 aa).

Residues 1–31 constitute a cross-link (cyclopeptide (Gly-Asn)); it reads GTFPCGESCVFIPCLTSAIGCSCKSKVCYKN. Cystine bridges form between Cys-5–Cys-21, Cys-9–Cys-23, and Cys-14–Cys-28.

Post-translationally, this is a cyclic peptide.

Probably participates in a plant defense mechanism. Has cytotoxic activity, active against a human lymphoma cell line with an IC(50) of 0.96 uM. This is Cyclotide vibi-G from Viola biflora (Yellow wood violet).